The sequence spans 560 residues: Putative transport protein VS_1837 (560 aa).

5 helical membrane-spanning segments follow: residues 5-25 (VVLLLKQNPILLIFVVLSIGL), 37-57 (LGNSIGVLITSLIMGHLGFSF), 66-86 (FMLFIYCVGIEAGPNFFGIFF), 91-111 (HYLILSLVVLSTAIALTYFCS), and 155-175 (LGLVIENLSVGYAMAYLVGLI). 2 consecutive RCK C-terminal domains span residues 203–292 (RGLG…FRNG) and 293–376 (KEVF…KIGF). A run of 6 helical transmembrane segments spans residues 386-406 (LTAFCSFFILGILFGLITMTF), 409-429 (VSFGLGNAVGLLLSGIMLGFL), 450-470 (LGLMFFMVGIGLSAGGKIFEH), 478-498 (VIGIALIVSVLPVFFAYLVGA), 506-526 (ALLFGAIIGARTCAPAMDIVN), and 539-559 (AGTYAIANILMTLAGTFIIII).

Belongs to the AAE transporter (TC 2.A.81) family. YbjL subfamily.

Its subcellular location is the cell membrane. The chain is Putative transport protein VS_1837 from Vibrio atlanticus (strain LGP32) (Vibrio splendidus (strain Mel32)).